A 298-amino-acid polypeptide reads, in one-letter code: ATP phosphoribosyltransferase (298 aa).

Belongs to the ATP phosphoribosyltransferase family. Long subfamily. It depends on Mg(2+) as a cofactor.

It is found in the cytoplasm. It carries out the reaction 1-(5-phospho-beta-D-ribosyl)-ATP + diphosphate = 5-phospho-alpha-D-ribose 1-diphosphate + ATP. It participates in amino-acid biosynthesis; L-histidine biosynthesis; L-histidine from 5-phospho-alpha-D-ribose 1-diphosphate: step 1/9. Feedback inhibited by histidine. Its function is as follows. Catalyzes the condensation of ATP and 5-phosphoribose 1-diphosphate to form N'-(5'-phosphoribosyl)-ATP (PR-ATP). Has a crucial role in the pathway because the rate of histidine biosynthesis seems to be controlled primarily by regulation of HisG enzymatic activity. The protein is ATP phosphoribosyltransferase of Aliivibrio fischeri (strain ATCC 700601 / ES114) (Vibrio fischeri).